The primary structure comprises 257 residues: Staphylococcal secretory antigen SsaA (257 aa).

An N-terminal signal peptide occupies residues 1–26 (MKKIATATIATAGIATFAFAHHDAQA). 8 tandem repeats follow at residues 73 to 75 (YNN), 76 to 78 (YNN), 84 to 86 (YNN), 87 to 89 (YSN), 90 to 92 (YNN), 93 to 95 (YSN), 96 to 98 (YNN), and 99 to 101 (YNN). Positions 73 to 101 (YNNYNNYNYYGYNNYSNYNNYSNYNNYNN) are 8 X 3 AA repeats of Y-[NS]-N. The tract at residues 101 to 144 (NYQSNNTQSQRTTQPTGGLGASYSTSSSNVHVTTTSAPSSNGVS) is disordered. A compositionally biased stretch (polar residues) spans 107–116 (TQSQRTTQPT). The segment covering 122 to 136 (SYSTSSSNVHVTTTS) has biased composition (low complexity). The 122-residue stretch at 136–257 (SAPSSNGVSL…SQAASYNYIH (122 aa)) folds into the Peptidase C51 domain.

It is found in the secreted. Functionally, not known; immunogenic protein expressed during sepsis and particularly during episodes of infective endocarditis. The polypeptide is Staphylococcal secretory antigen SsaA (ssaA) (Staphylococcus epidermidis).